Consider the following 160-residue polypeptide: Cytochrome c-type biogenesis protein CcmE (160 aa).

Topologically, residues 1–8 (MSAPRKTR) are cytoplasmic. Residues 9–29 (LYAILAVICGAVLTVALTLYA) form a helical; Signal-anchor for type II membrane protein membrane-spanning segment. At 30 to 160 (LSSNIDLFYT…PAAVTEGKRL (131 aa)) the chain is on the periplasmic side. Residues histidine 130 and tyrosine 134 each coordinate heme.

It belongs to the CcmE/CycJ family.

It is found in the cell inner membrane. Its function is as follows. Heme chaperone required for the biogenesis of c-type cytochromes. Transiently binds heme delivered by CcmC and transfers the heme to apo-cytochromes in a process facilitated by CcmF and CcmH. The sequence is that of Cytochrome c-type biogenesis protein CcmE from Pectobacterium carotovorum subsp. carotovorum (strain PC1).